We begin with the raw amino-acid sequence, 211 residues long: Large ribosomal subunit protein bL25 (211 aa).

Positions 185–211 (ESTTPAATEGEETEAAAAAPEPAAEDK) are disordered. A compositionally biased stretch (low complexity) spans 199 to 211 (AAAAAPEPAAEDK).

The protein belongs to the bacterial ribosomal protein bL25 family. CTC subfamily. As to quaternary structure, part of the 50S ribosomal subunit; part of the 5S rRNA/L5/L18/L25 subcomplex. Contacts the 5S rRNA. Binds to the 5S rRNA independently of L5 and L18.

This is one of the proteins that binds to the 5S RNA in the ribosome where it forms part of the central protuberance. The polypeptide is Large ribosomal subunit protein bL25 (Treponema denticola (strain ATCC 35405 / DSM 14222 / CIP 103919 / JCM 8153 / KCTC 15104)).